The sequence spans 291 residues: 4-hydroxy-tetrahydrodipicolinate synthase (291 aa).

Thr45 is a binding site for pyruvate. The Proton donor/acceptor role is filled by Tyr133. Lys161 serves as the catalytic Schiff-base intermediate with substrate. Pyruvate is bound at residue Ile203.

It belongs to the DapA family. As to quaternary structure, homotetramer; dimer of dimers.

The protein localises to the cytoplasm. It carries out the reaction L-aspartate 4-semialdehyde + pyruvate = (2S,4S)-4-hydroxy-2,3,4,5-tetrahydrodipicolinate + H2O + H(+). Its pathway is amino-acid biosynthesis; L-lysine biosynthesis via DAP pathway; (S)-tetrahydrodipicolinate from L-aspartate: step 3/4. Catalyzes the condensation of (S)-aspartate-beta-semialdehyde [(S)-ASA] and pyruvate to 4-hydroxy-tetrahydrodipicolinate (HTPA). The protein is 4-hydroxy-tetrahydrodipicolinate synthase of Neisseria gonorrhoeae (strain ATCC 700825 / FA 1090).